The following is a 150-amino-acid chain: Ribonuclease HI (150 aa).

In terms of domain architecture, RNase H type-1 spans 1 to 142 (MSDSVELFTD…ADQLANRGVD (142 aa)). Mg(2+) contacts are provided by Asp10, Glu48, Asp70, and Asp134.

It belongs to the RNase H family. In terms of assembly, monomer. Mg(2+) serves as cofactor.

The protein resides in the cytoplasm. It carries out the reaction Endonucleolytic cleavage to 5'-phosphomonoester.. Its function is as follows. Endonuclease that specifically degrades the RNA of RNA-DNA hybrids. The sequence is that of Ribonuclease HI from Pseudomonas syringae pv. tomato (strain ATCC BAA-871 / DC3000).